We begin with the raw amino-acid sequence, 218 residues long: 3,4-dihydroxy-2-butanone 4-phosphate synthase (218 aa).

Residues 38-39, Asp43, 151-155, and Glu175 contribute to the D-ribulose 5-phosphate site; these read RE and RRGHT. Glu39 contributes to the Mg(2+) binding site. The tract at residues 125-151 is disordered; sequence PHAKPEDLARPGHVFPLRARPGGVMTR. Residue His154 coordinates Mg(2+).

Belongs to the DHBP synthase family. Homodimer. Requires Mg(2+) as cofactor. The cofactor is Mn(2+).

The enzyme catalyses D-ribulose 5-phosphate = (2S)-2-hydroxy-3-oxobutyl phosphate + formate + H(+). Its pathway is cofactor biosynthesis; riboflavin biosynthesis; 2-hydroxy-3-oxobutyl phosphate from D-ribulose 5-phosphate: step 1/1. Its function is as follows. Catalyzes the conversion of D-ribulose 5-phosphate to formate and 3,4-dihydroxy-2-butanone 4-phosphate. In Vibrio parahaemolyticus serotype O3:K6 (strain RIMD 2210633), this protein is 3,4-dihydroxy-2-butanone 4-phosphate synthase.